We begin with the raw amino-acid sequence, 317 residues long: WSCD family member CG9164 (317 aa).

Residues 8–28 traverse the membrane as a helical segment; sequence FFGVSATIIIYIGGVLFLSMN. Asn151, Asn227, and Asn233 each carry an N-linked (GlcNAc...) asparagine glycan.

It belongs to the WSCD family.

Its subcellular location is the membrane. The polypeptide is WSCD family member CG9164 (Drosophila melanogaster (Fruit fly)).